The following is a 219-amino-acid chain: Regulatory protein YeiL (219 aa).

A sensory domain region spans residues 19-97 (RLFHFLARDY…IEECWCLALP (79 aa)). Residues cysteine 68, cysteine 91, cysteine 93, and cysteine 116 each coordinate [4Fe-4S] cluster. Residues 111–131 (FLRKLCVTLSHKNYRNIVSLT) are dimer interface. The 64-residue stretch at 136–199 (FPLVNRLAAF…KKGYLIKNRK (64 aa)) folds into the HTH crp-type domain. A DNA-binding region (H-T-H motif) is located at residues 158–181 (KHTQAAEYLGVSYRHLLYVLAQFI).

In terms of assembly, homodimer. [4Fe-4S] cluster is required as a cofactor.

It is found in the cytoplasm. Functionally, transcription regulator involved in mid-term, stationary-phase viability under nitrogen starvation. Might control expression of the salvage pathways or in some other way repress the recycling of nucleobases to nucleic acids and enhance their use as general nitrogen sources during nitrogen-limited growth. The sequence is that of Regulatory protein YeiL (yeiL) from Escherichia coli O157:H7.